The primary structure comprises 555 residues: Membrane protein insertase YidC (555 aa).

Helical transmembrane passes span 7–24, 367–387, 437–457, 476–496, and 511–531; these read VLWVIFFMSAVMLYDNWQ, WGWSIVLLTLLIKAVFFPLSA, LPVVIQIPVFISLYWVLLASV, PFFILPVLMAVSMYVQTSLNP, and PIAFSVMFFFFPAGLVLYYVV.

It belongs to the OXA1/ALB3/YidC family. Type 1 subfamily. Interacts with the Sec translocase complex via SecD. Specifically interacts with transmembrane segments of nascent integral membrane proteins during membrane integration.

The protein localises to the cell inner membrane. Required for the insertion and/or proper folding and/or complex formation of integral membrane proteins into the membrane. Involved in integration of membrane proteins that insert both dependently and independently of the Sec translocase complex, as well as at least some lipoproteins. Aids folding of multispanning membrane proteins. The chain is Membrane protein insertase YidC from Burkholderia lata (strain ATCC 17760 / DSM 23089 / LMG 22485 / NCIMB 9086 / R18194 / 383).